Here is a 170-residue protein sequence, read N- to C-terminus: NADH-ubiquinone oxidoreductase chain 6 (170 aa).

The next 5 helical transmembrane spans lie at Met1–Ser21, Phe26–Phe46, Ser49–Tyr69, Val86–Gly106, and Trp138–Val158.

This sequence belongs to the complex I subunit 6 family. As to quaternary structure, core subunit of respiratory chain NADH dehydrogenase (Complex I) which is composed of 45 different subunits.

It localises to the mitochondrion inner membrane. The enzyme catalyses a ubiquinone + NADH + 5 H(+)(in) = a ubiquinol + NAD(+) + 4 H(+)(out). Core subunit of the mitochondrial membrane respiratory chain NADH dehydrogenase (Complex I) which catalyzes electron transfer from NADH through the respiratory chain, using ubiquinone as an electron acceptor. Essential for the catalytic activity and assembly of complex I. This is NADH-ubiquinone oxidoreductase chain 6 (mt-nd6) from Xenopus laevis (African clawed frog).